We begin with the raw amino-acid sequence, 201 residues long: Acyl-homoserine-lactone synthase (201 aa).

This sequence belongs to the autoinducer synthase family.

The catalysed reaction is a fatty acyl-[ACP] + S-adenosyl-L-methionine = an N-acyl-L-homoserine lactone + S-methyl-5'-thioadenosine + holo-[ACP] + H(+). Its function is as follows. Required for the synthesis of BHL (N-butanoyl-L-homoserine lactone), and HHL (N-hexanoyl-L-homoserine lactone) autoinducer molecules which bind to RhlR and thus acts in elastase biosynthesis regulation. This is Acyl-homoserine-lactone synthase (rhlI) from Pseudomonas aeruginosa (strain ATCC 15692 / DSM 22644 / CIP 104116 / JCM 14847 / LMG 12228 / 1C / PRS 101 / PAO1).